Reading from the N-terminus, the 162-residue chain is Malaria protein EXP-1 (162 aa).

An N-terminal signal peptide occupies residues 1-22 (MKILSVFFLVLFFIIFNKESLA). Residues 80–101 (VLAGLLGVVSTVLLGGVGLVLY) form a helical membrane-spanning segment. Residues 109–162 (PFKIGSSDPADNANPDADSESNGEPNADPQVTAQDVTPEQPQGDDNNLVSGPEH) are disordered. A compositionally biased stretch (low complexity) spans 114 to 130 (SSDPADNANPDADSESN). An epitope (deduced) region spans residues 120 to 137 (NANPDADSESNGEPNADP). Residues 137 to 162 (PQVTAQDVTPEQPQGDDNNLVSGPEH) are compositionally biased toward polar residues.

The protein localises to the parasitophorous vacuole membrane. This is Malaria protein EXP-1 (EXP-1) from Plasmodium falciparum.